A 153-amino-acid polypeptide reads, in one-letter code: Pheromone-binding protein Gp-9 (153 aa).

The signal sequence occupies residues 1–19 (MKTFVLHIFIFALVAFASA). 3 cysteine pairs are disulfide-bonded: Cys37–Cys77, Cys73–Cys129, and Cys118–Cys138.

It belongs to the PBP/GOBP family. Homodimer.

The protein resides in the secreted. Its function is as follows. Colony queen number, a major feature of social organization, is associated with worker genotype for Gp-9. Colonies are headed by either a single reproductive queen (monogyne form) or multiple queens (polygyne form). Differences in worker Gp-9 genotypes between social forms may cause differences in workers' abilities to recognize queens and regulate their numbers. This is Pheromone-binding protein Gp-9 from Solenopsis saevissima (Fire ant).